Here is a 371-residue protein sequence, read N- to C-terminus: Cysteine proteinase EP-B 1 (371 aa).

An N-terminal signal peptide occupies residues 1-28 (MGLLSKKLLVASMVAAVLAVAAVELCSA). The propeptide at 29 to 133 (IPMEDKDLES…FMYAALNVSD (105 aa)) is activation peptide. An N-linked (GlcNAc...) asparagine glycan is attached at N130. 3 disulfides stabilise this stretch: C155/C197, C189/C230, and C291/C343. Residue C158 is part of the active site. Active-site residues include H297 and N318.

This sequence belongs to the peptidase C1 family.

This Hordeum vulgare (Barley) protein is Cysteine proteinase EP-B 1.